Here is a 468-residue protein sequence, read N- to C-terminus: Kynureninase 2 (468 aa).

Residues L134, T135, 162–165, D247, H250, and Y272 each bind pyridoxal 5'-phosphate; that span reads FPSD. K273 carries the N6-(pyridoxal phosphate)lysine modification. Residues W312 and N340 each contribute to the pyridoxal 5'-phosphate site.

Belongs to the kynureninase family. As to quaternary structure, homodimer. The cofactor is pyridoxal 5'-phosphate.

It is found in the cytoplasm. It catalyses the reaction L-kynurenine + H2O = anthranilate + L-alanine + H(+). The catalysed reaction is 3-hydroxy-L-kynurenine + H2O = 3-hydroxyanthranilate + L-alanine + H(+). The protein operates within amino-acid degradation; L-kynurenine degradation; L-alanine and anthranilate from L-kynurenine: step 1/1. Its pathway is cofactor biosynthesis; NAD(+) biosynthesis; quinolinate from L-kynurenine: step 2/3. Functionally, catalyzes the cleavage of L-kynurenine (L-Kyn) and L-3-hydroxykynurenine (L-3OHKyn) into anthranilic acid (AA) and 3-hydroxyanthranilic acid (3-OHAA), respectively. The sequence is that of Kynureninase 2 (bna5-2) from Aspergillus oryzae (strain ATCC 42149 / RIB 40) (Yellow koji mold).